The sequence spans 613 residues: Dihydroxy-acid dehydratase (613 aa).

Aspartate 81 provides a ligand contact to Mg(2+). Cysteine 122 provides a ligand contact to [2Fe-2S] cluster. Aspartate 123 and lysine 124 together coordinate Mg(2+). An N6-carboxylysine modification is found at lysine 124. Cysteine 195 is a binding site for [2Fe-2S] cluster. Position 491 (glutamate 491) interacts with Mg(2+). Serine 517 (proton acceptor) is an active-site residue.

It belongs to the IlvD/Edd family. In terms of assembly, homodimer. [2Fe-2S] cluster serves as cofactor. Requires Mg(2+) as cofactor.

The catalysed reaction is (2R)-2,3-dihydroxy-3-methylbutanoate = 3-methyl-2-oxobutanoate + H2O. It catalyses the reaction (2R,3R)-2,3-dihydroxy-3-methylpentanoate = (S)-3-methyl-2-oxopentanoate + H2O. Its pathway is amino-acid biosynthesis; L-isoleucine biosynthesis; L-isoleucine from 2-oxobutanoate: step 3/4. It functions in the pathway amino-acid biosynthesis; L-valine biosynthesis; L-valine from pyruvate: step 3/4. Its function is as follows. Functions in the biosynthesis of branched-chain amino acids. Catalyzes the dehydration of (2R,3R)-2,3-dihydroxy-3-methylpentanoate (2,3-dihydroxy-3-methylvalerate) into 2-oxo-3-methylpentanoate (2-oxo-3-methylvalerate) and of (2R)-2,3-dihydroxy-3-methylbutanoate (2,3-dihydroxyisovalerate) into 2-oxo-3-methylbutanoate (2-oxoisovalerate), the penultimate precursor to L-isoleucine and L-valine, respectively. This is Dihydroxy-acid dehydratase from Vibrio vulnificus (strain CMCP6).